Consider the following 150-residue polypeptide: uncharacterized protein (150 aa).

This is an uncharacterized protein from Saccharomyces cerevisiae (strain ATCC 204508 / S288c) (Baker's yeast).